Consider the following 709-residue polypeptide: Polyribonucleotide nucleotidyltransferase (709 aa).

Mg(2+) contacts are provided by D485 and D491. The KH domain occupies P552–I611. Positions G621–K689 constitute an S1 motif domain.

The protein belongs to the polyribonucleotide nucleotidyltransferase family. In terms of assembly, component of the RNA degradosome, which is a multiprotein complex involved in RNA processing and mRNA degradation. Requires Mg(2+) as cofactor.

It localises to the cytoplasm. It carries out the reaction RNA(n+1) + phosphate = RNA(n) + a ribonucleoside 5'-diphosphate. Its function is as follows. Involved in mRNA degradation. Catalyzes the phosphorolysis of single-stranded polyribonucleotides processively in the 3'- to 5'-direction. The polypeptide is Polyribonucleotide nucleotidyltransferase (Haemophilus influenzae (strain 86-028NP)).